The chain runs to 85 residues: Cell division topological specificity factor (85 aa).

The protein belongs to the MinE family.

In terms of biological role, prevents the cell division inhibition by proteins MinC and MinD at internal division sites while permitting inhibition at polar sites. This ensures cell division at the proper site by restricting the formation of a division septum at the midpoint of the long axis of the cell. In Xanthomonas euvesicatoria pv. vesicatoria (strain 85-10) (Xanthomonas campestris pv. vesicatoria), this protein is Cell division topological specificity factor.